Reading from the N-terminus, the 424-residue chain is Pachytene checkpoint protein 2 homolog (424 aa).

ATP is bound at residue 171-178 (GPPGTGKT).

This sequence belongs to the AAA ATPase family. PCH2 subfamily.

Plays a key role in chromosome recombination and chromosome structure development during meiosis. Required at early steps in meiotic recombination that leads to non-crossovers pathways. Also needed for efficient completion of homologous synapsis by influencing crossover distribution along the chromosomes affecting both crossovers and non-crossovers pathways. The protein is Pachytene checkpoint protein 2 homolog (trip13) of Danio rerio (Zebrafish).